The primary structure comprises 612 residues: Sulfite reductase [NADPH] hemoprotein beta-component (612 aa).

The disordered stretch occupies residues 1–26 (MDDHKPIETPDGPAVDTPGIGARRYE). The [4Fe-4S] cluster site is built by Cys-469, Cys-475, Cys-514, and Cys-518. Residue Cys-518 participates in siroheme binding.

It belongs to the nitrite and sulfite reductase 4Fe-4S domain family. As to quaternary structure, alpha(8)-beta(8). The alpha component is a flavoprotein, the beta component is a hemoprotein. Requires siroheme as cofactor. [4Fe-4S] cluster serves as cofactor.

It carries out the reaction hydrogen sulfide + 3 NADP(+) + 3 H2O = sulfite + 3 NADPH + 4 H(+). It participates in sulfur metabolism; hydrogen sulfide biosynthesis; hydrogen sulfide from sulfite (NADPH route): step 1/1. Functionally, component of the sulfite reductase complex that catalyzes the 6-electron reduction of sulfite to sulfide. This is one of several activities required for the biosynthesis of L-cysteine from sulfate. This Methylorubrum extorquens (strain CM4 / NCIMB 13688) (Methylobacterium extorquens) protein is Sulfite reductase [NADPH] hemoprotein beta-component.